We begin with the raw amino-acid sequence, 189 residues long: Potassium-transporting ATPase KdpC subunit (189 aa).

The helical transmembrane segment at 6–26 threads the bilayer; sequence PAILFFIVFTILCGGVYPAVV.

This sequence belongs to the KdpC family. The system is composed of three essential subunits: KdpA, KdpB and KdpC.

The protein localises to the cell inner membrane. In terms of biological role, part of the high-affinity ATP-driven potassium transport (or Kdp) system, which catalyzes the hydrolysis of ATP coupled with the electrogenic transport of potassium into the cytoplasm. This subunit acts as a catalytic chaperone that increases the ATP-binding affinity of the ATP-hydrolyzing subunit KdpB by the formation of a transient KdpB/KdpC/ATP ternary complex. The sequence is that of Potassium-transporting ATPase KdpC subunit from Geotalea uraniireducens (strain Rf4) (Geobacter uraniireducens).